Here is a 376-residue protein sequence, read N- to C-terminus: MYMRKIIHIDMDAFFASIEQRDRPELRKKPLIVGGLPRGRGVVATCCYEARRYGIHSAMSANRAYKLCPHAVFVKPRMVLYKEVSLQIMAIFREYTKKVEPLSLDEAFLDVTEYLQINGSATLLAREICALIKLRTDLSASAGVSYNKFLAKIASDLKKPGGISTVPPEEARQFIDRLSIGKFYGVGKITKSKMQSLGIQTGKDLRQYSKDFLMKRFGKAGSFFFYNARGLDERPVCPYQNRKSIGKETTLVQDTNRPEEIRDILINLSSLLGKALENNSQLAQTLTLKIRYSDFTTTTRSLSLQKPFSCPADIEECLPSLLTNCNLTHKPIRLLGISLSKLTYIGSAPRPIPLPFPKDRRSNCLNRFFAIKEESP.

The 182-residue stretch at 6–187 (IIHIDMDAFF…LSIGKFYGVG (182 aa)) folds into the UmuC domain. Residues Asp-10 and Asp-105 each contribute to the Mg(2+) site. Glu-106 is an active-site residue.

The protein belongs to the DNA polymerase type-Y family. Monomer. The cofactor is Mg(2+).

Its subcellular location is the cytoplasm. It catalyses the reaction DNA(n) + a 2'-deoxyribonucleoside 5'-triphosphate = DNA(n+1) + diphosphate. Its function is as follows. Poorly processive, error-prone DNA polymerase involved in untargeted mutagenesis. Copies undamaged DNA at stalled replication forks, which arise in vivo from mismatched or misaligned primer ends. These misaligned primers can be extended by PolIV. Exhibits no 3'-5' exonuclease (proofreading) activity. May be involved in translesional synthesis, in conjunction with the beta clamp from PolIII. The sequence is that of DNA polymerase IV from Desulfotalea psychrophila (strain LSv54 / DSM 12343).